A 1157-amino-acid chain; its full sequence is Hephaestin (1157 aa).

The N-terminal stretch at 1–18 is a signal peptide; it reads MKAGHLLWALLLMHSLWS. Residues 19–1109 lie on the Extracellular side of the membrane; it reads IPTDGAIRNY…PIKDVEILSS (1091 aa). Plastocyanin-like domains are found at residues 24–206, 218–366, 370–559, 569–717, 730–902, and 910–1066; these read AIRN…LITC, QRKD…VDSC, PPVD…LLVC, KQKG…VSQC, ASRV…LVIC, and NGGR…SHEE. N49 and N54 each carry an N-linked (GlcNAc...) asparagine glycan. Positions 70 and 73 each coordinate Na(+). The Cu(2+) site is built by H126 and H128. H126 contributes to the O2 binding site. The Ca(2+) site is built by K134, D152, and D153. Residue N164 is glycosylated (N-linked (GlcNAc...) asparagine). The cysteines at positions 180 and 206 are disulfide-linked. Residues H186 and H188 each coordinate Cu(2+). H186 lines the O2 pocket. N236 carries an N-linked (GlcNAc...) asparagine glycan. Residue S265 participates in Na(+) binding. The cysteines at positions 285 and 366 are disulfide-linked. Cu(2+) contacts are provided by H304, C347, and H352. Na(+)-binding residues include Y416, G425, and Y428. A disulfide bond links C533 and C559. N-linked (GlcNAc...) asparagine glycosylation occurs at N587. S616 contributes to the Na(+) binding site. A disulfide bridge links C636 with C717. Residues H655, C698, H703, and M708 each contribute to the Cu(2+) site. N-linked (GlcNAc...) asparagine glycosylation is found at N713 and N757. The Na(+) site is built by F768 and G777. C876 and C902 are oxidised to a cystine. N930 carries N-linked (GlcNAc...) asparagine glycosylation. Cu(2+)-binding residues include H999, H1002, H1004, H1044, C1045, H1046, H1050, and M1055. O2 contacts are provided by H1002 and H1004. H1046 is a binding site for O2. The helical transmembrane segment at 1110 to 1130 threads the bilayer; it reads ALIAICVLLLLIALALGGVVW. Residues 1131–1157 are Cytoplasmic-facing; the sequence is YQHRQRKLRRNRRSILDDSFKLLSLKQ. Phosphoserine is present on residues S1144, S1149, and S1154.

Belongs to the multicopper oxidase family. In terms of assembly, part of a complex composed of SLC40A1/ferroportin, TF/transferrin and HEPH/hephaestin that transfers iron from cells to transferrin. Requires Cu cation as cofactor.

The protein localises to the basolateral cell membrane. The catalysed reaction is 4 Fe(2+) + O2 + 4 H(+) = 4 Fe(3+) + 2 H2O. In terms of biological role, plasma membrane ferroxidase that mediates the extracellular conversion of ferrous/Fe(2+) iron into its ferric/Fe(3+) form. Couples ferroportin which specifically exports ferrous/Fe(2+) iron from cells to transferrin that only binds and shuttles extracellular ferric/Fe(3+) iron throughout the body. By helping iron transfer from cells to blood mainly contributes to dietary iron absorption by the intestinal epithelium and more generally regulates iron levels in the body. This Mus musculus (Mouse) protein is Hephaestin.